Consider the following 116-residue polypeptide: Nucleoid-associated protein P9515_00191 (116 aa).

Basic and acidic residues predominate over residues 89–98 (STTTMKERMN). The disordered stretch occupies residues 89–116 (STTTMKERMNDLTGGLNLNLPGLDNNDS). Positions 99–116 (DLTGGLNLNLPGLDNNDS) are enriched in low complexity.

The protein belongs to the YbaB/EbfC family. Homodimer.

Its subcellular location is the cytoplasm. The protein localises to the nucleoid. Its function is as follows. Binds to DNA and alters its conformation. May be involved in regulation of gene expression, nucleoid organization and DNA protection. The protein is Nucleoid-associated protein P9515_00191 of Prochlorococcus marinus (strain MIT 9515).